The primary structure comprises 717 residues: Catalase-peroxidase (717 aa).

Residues 1 to 12 form the signal peptide; that stretch reads MTSKGMCPVAHG. The segment at residues 93–221 is a cross-link (tryptophyl-tyrosyl-methioninium (Trp-Tyr) (with M-247)); the sequence is WHSAGSYRIA…LAAVMMGLIY (129 aa). The Proton acceptor role is filled by histidine 94. The segment at residues 221 to 247 is a cross-link (tryptophyl-tyrosyl-methioninium (Tyr-Met) (with W-93)); that stretch reads YVNPEGVDGKPDPLKTAQDMRVTFARM. Position 262 (histidine 262) interacts with heme b.

It belongs to the peroxidase family. Peroxidase/catalase subfamily. Homodimer or homotetramer. Heme b is required as a cofactor. In terms of processing, formation of the three residue Trp-Tyr-Met cross-link is important for the catalase, but not the peroxidase activity of the enzyme.

It catalyses the reaction H2O2 + AH2 = A + 2 H2O. The enzyme catalyses 2 H2O2 = O2 + 2 H2O. Functionally, bifunctional enzyme with both catalase and broad-spectrum peroxidase activity. This Polynucleobacter asymbioticus (strain DSM 18221 / CIP 109841 / QLW-P1DMWA-1) (Polynucleobacter necessarius subsp. asymbioticus) protein is Catalase-peroxidase.